The sequence spans 356 residues: Protein-arginine kinase (356 aa).

Positions 24–254 (IVLSSRIRLA…MQLIQQERAA (231 aa)) constitute a Phosphagen kinase C-terminal domain. ATP is bound by residues 27-31 (SSRIR), His91, Arg125, 176-180 (RASVM), and 207-212 (RGIYGE). The RDXXRA motif of the pArg binding pocket involved in allosteric regulation motif lies at 337-342 (RDERRA).

The protein belongs to the ATP:guanido phosphotransferase family.

The enzyme catalyses L-arginyl-[protein] + ATP = N(omega)-phospho-L-arginyl-[protein] + ADP + H(+). Appears to be allosterically activated by the binding of pArg-containing polypeptides to the pArg-binding pocket localized in the C-terminal domain of McsB. Functionally, catalyzes the specific phosphorylation of arginine residues in a large number of proteins. Is part of the bacterial stress response system. Protein arginine phosphorylation has a physiologically important role and is involved in the regulation of many critical cellular processes, such as protein homeostasis, motility, competence, and stringent and stress responses, by regulating gene expression and protein activity. This Halalkalibacterium halodurans (strain ATCC BAA-125 / DSM 18197 / FERM 7344 / JCM 9153 / C-125) (Bacillus halodurans) protein is Protein-arginine kinase.